The primary structure comprises 249 residues: DNA repair protein RecO (249 aa).

The protein belongs to the RecO family.

Involved in DNA repair and RecF pathway recombination. The protein is DNA repair protein RecO of Rhodopseudomonas palustris (strain HaA2).